The chain runs to 389 residues: WAT1-related protein At1g21890 (389 aa).

Transmembrane regions (helical) follow at residues 13–33, 40–60, 73–93, 102–122, 142–162, 191–211, 225–245, 260–280, 287–307, and 312–332; these read LAMISMQFGYAGMYIITMVSL, YVLAVYRHAIATAVIAPFALF, IFLQIALLGFIEPVLDQNLYY, TFASATANVLPAITFVLAIIF, VITVSGALLMTLYKGPIVDFI, WIPGTLMLLGRTFGWAGFFIL, LTTLICLMGTLEGTAVSLVTV, FAAAYSGVICSGVAYYVQGVV, VFVATFNPLCVVITAALGVVV, and IHLGSVIGTLFIIVGLYTVVW. 2 consecutive EamA domains span residues 23–150 and 205–331; these read AGMY…GALL and WAGF…YTVV. The tract at residues 339–361 is disordered; sequence RMTDDDEDCKGLPIKSPVKPVDT.

Belongs to the drug/metabolite transporter (DMT) superfamily. Plant drug/metabolite exporter (P-DME) (TC 2.A.7.4) family.

It localises to the membrane. The protein is WAT1-related protein At1g21890 of Arabidopsis thaliana (Mouse-ear cress).